Consider the following 459-residue polypeptide: Argininosuccinate lyase (459 aa).

It belongs to the lyase 1 family. Argininosuccinate lyase subfamily.

The protein resides in the cytoplasm. The catalysed reaction is 2-(N(omega)-L-arginino)succinate = fumarate + L-arginine. Its pathway is amino-acid biosynthesis; L-arginine biosynthesis; L-arginine from L-ornithine and carbamoyl phosphate: step 3/3. In Sulfurihydrogenibium sp. (strain YO3AOP1), this protein is Argininosuccinate lyase.